The following is a 398-amino-acid chain: tRNA(Ile)-lysidine synthase (398 aa).

25–30 contacts ATP; sequence SGGVDS.

The protein belongs to the tRNA(Ile)-lysidine synthase family.

Its subcellular location is the cytoplasm. It carries out the reaction cytidine(34) in tRNA(Ile2) + L-lysine + ATP = lysidine(34) in tRNA(Ile2) + AMP + diphosphate + H(+). In terms of biological role, ligates lysine onto the cytidine present at position 34 of the AUA codon-specific tRNA(Ile) that contains the anticodon CAU, in an ATP-dependent manner. Cytidine is converted to lysidine, thus changing the amino acid specificity of the tRNA from methionine to isoleucine. This is tRNA(Ile)-lysidine synthase from Francisella tularensis subsp. novicida (strain U112).